The following is a 207-amino-acid chain: Ribosomal RNA small subunit methyltransferase G (207 aa).

Residues glycine 74, leucine 79, 125–126 (VE), and arginine 140 each bind S-adenosyl-L-methionine.

This sequence belongs to the methyltransferase superfamily. RNA methyltransferase RsmG family.

Its subcellular location is the cytoplasm. It catalyses the reaction guanosine(527) in 16S rRNA + S-adenosyl-L-methionine = N(7)-methylguanosine(527) in 16S rRNA + S-adenosyl-L-homocysteine. Its function is as follows. Specifically methylates the N7 position of guanine in position 527 of 16S rRNA. This is Ribosomal RNA small subunit methyltransferase G from Shewanella piezotolerans (strain WP3 / JCM 13877).